Reading from the N-terminus, the 318-residue chain is Glutathione synthetase (318 aa).

An ATP-grasp domain is found at 129–314 (KLAITEFPDL…VPEMFAVALE (186 aa)). 155-211 (HAAQGDVIVKPLDDMGGTGIFRLQRSEPNLNAILETLTDNGTRTIMAQRYIPEIVKG) provides a ligand contact to ATP. 2 residues coordinate Mg(2+): Glu-285 and Asn-287.

This sequence belongs to the prokaryotic GSH synthase family. It depends on Mg(2+) as a cofactor. Requires Mn(2+) as cofactor.

It carries out the reaction gamma-L-glutamyl-L-cysteine + glycine + ATP = glutathione + ADP + phosphate + H(+). It functions in the pathway sulfur metabolism; glutathione biosynthesis; glutathione from L-cysteine and L-glutamate: step 2/2. This chain is Glutathione synthetase, found in Bordetella pertussis (strain Tohama I / ATCC BAA-589 / NCTC 13251).